The chain runs to 319 residues: uncharacterized protein (319 aa).

9 consecutive transmembrane segments (helical) span residues 11–31 (GLWA…LGVF), 43–63 (ALGW…GVWW), 83–103 (LSVD…IPAL), 108–128 (VLFW…FAGV), 134–154 (FHWL…KLFL), 195–215 (LATP…LFAL), 220–240 (AIFA…FAIL), 260–280 (KVGL…IDFV), and 284–304 (PEVS…ASLI).

The protein belongs to the TerC family.

The protein localises to the cell membrane. This is an uncharacterized protein from Myxococcus xanthus.